Reading from the N-terminus, the 1189-residue chain is Disabled homolog 2-interacting protein (1189 aa).

Residues 1–75 (MSAGGSARKS…EPSAATPFRV (75 aa)) form a disordered region. Residues 20–38 (LLRRPRLQRQRSRSRSRTR) show a composition bias toward basic residues. Residues 39–49 (PARESPQERPG) are compositionally biased toward basic and acidic residues. The PH domain occupies 101–202 (SFRHILPGFR…WMENLRRAVH (102 aa)). In terms of domain architecture, C2 spans 193–311 (WMENLRRAVH…AGRQFVEKWY (119 aa)). Positions 387–595 (GKVKDFLTDL…TNMQRFLLEI (209 aa)) constitute a Ras-GAP domain. Residues 646 to 943 (LRDVHTALST…RTPPNLLSTL (298 aa)) form a necessary for interaction with AKT1 region. The segment covering 653–668 (LSTPGSGQLPGTNDLA) has biased composition (polar residues). 2 disordered regions span residues 653-678 (LSTP…SSSI) and 715-742 (RSSG…MANG). The span at 669 to 678 (STPGSGSSSI) shows a compositional bias: low complexity. The span at 715 to 731 (RSSGVQPSPARSSSYSE) shows a compositional bias: polar residues. Serine 728 is subject to Phosphoserine; by MAP3K5 and RIPK1. Serine 747 is subject to Phosphoserine. Disordered regions lie at residues 803–823 (AGQT…PQLL), 843–865 (PRGL…NSEE), 895–998 (SLTE…SPNA), 1015–1035 (EDEG…KDEL), and 1164–1189 (RNGI…SSNC). Positions 852–865 (EGHSSLSSHSNSEE) are enriched in low complexity. Residues 919 to 931 (QPPPPPPPPPPAP) are compositionally biased toward pro residues. 2 stretches are compositionally biased toward polar residues: residues 938–955 (NLLS…TLAS) and 966–976 (RLRQQSSSSKG). Serine 978 and serine 995 each carry phosphoserine. Residues 1023 to 1035 (PPHRDRLRSKDEL) show a composition bias toward basic and acidic residues. Residues 1026–1159 (RDRLRSKDEL…SALTQLKERY (134 aa)) adopt a coiled-coil conformation.

On plasma membrane, exists in an inactive form complexed with TNFR1; in response to TNF-alpha, dissociates from TNFR1 complex, translocates to cytoplasm and forms part of an intracellular signaling complex comprising TRADD, RIPK1, TRAF2 and MAP3K5. Interacts with DAB1. Interacts (via NPXY motif) with DAB2 (via PID domain). Interacts (via PH domain) with ERN1. Part of a cytoplasmic complex made of HIPK1, DAB2IP and MAP3K5 in response to TNF-alpha; this complex formation promotes MAP3K5-JNK activation and subsequent apoptosis. Interacts (via N-terminal domain) with JAK2; the interaction occurs in a IFNG/IFN-gamma-dependent manner and inhibits JAK2 autophosphorylation activity. Interacts (via C2 domain) with GSK3B; the interaction stimulates GSK3B kinase activation. Interacts (via C2 domain) with PPP2CA. Interacts (via proline-rich motif) with a regulatory p85 subunit (via SH3 domain) of the PI3K complex; the interaction inhibits the PI3K-AKT complex activity in a TNF-alpha-dependent manner in prostate cancer (PCa) cells. Interacts with AKT1; the interaction is increased in a TNF-alpha-induced manner. Interacts (via C2 domain and active form preferentially) with KDR/VEGFR2 (tyrosine-phosphorylated active form preferentially); the interaction occurs at the late phase of VEGFA response and inhibits KDR/VEGFR2 activity. Interacts (via N-terminus C2 domain) with MAP3K5 ('Ser-966' dephosphorylated form preferentially); the interaction occurs in a TNF-alpha-induced manner. Interacts (via Ras-GAP domain) with the catalytic subunit of protein phosphatase PP2A; the interaction occurs in resting endothelial cells, is further enhanced by TNF-alpha stimulation and is required to bridge PP2A to MAP3K5. Interacts (via C-terminus PER domain) with TRAF2 (via zinc fingers); the interaction occurs in a TNF-alpha-dependent manner. Interacts with 14-3-3 proteins; the interaction occurs in a TNF-alpha-dependent manner. Interacts (via Ras-GAP domain) with RIPK1 (via kinase domain); the interaction occurs in a TNF-alpha-dependent manner. Interacts with RAB40C; acts as a GAP for RAB40C. Post-translationally, in response to TNF-alpha-induction, phosphorylated at Ser-728; phosphorylation leads to a conformational change, and thus, increases its association with 14-3-3 proteins, MAP3K5, RIPK1 and TRAF2 in endothelial cells; also stimulates regulatory p85 subunit sequestring and PI3K-p85 complex activity inhibition. Expressed in endothelial and vascular smooth muscle cells (VSMCs). Expressed in prostate epithelial but poorly in prostate cancer cells. Poorly expressed in medulloblastoma cells compared to cerebellar precursor proliferating progenitor cells (at protein level). Low expression in prostate. Down-regulated in prostate cancer.

It localises to the cytoplasm. Its subcellular location is the cell membrane. It is found in the membrane. The protein resides in the cell projection. The protein localises to the dendrite. Functions as a scaffold protein implicated in the regulation of a large spectrum of both general and specialized signaling pathways. Involved in several processes such as innate immune response, inflammation and cell growth inhibition, apoptosis, cell survival, angiogenesis, cell migration and maturation. Also plays a role in cell cycle checkpoint control; reduces G1 phase cyclin levels resulting in G0/G1 cell cycle arrest. Mediates signal transduction by receptor-mediated inflammatory signals, such as the tumor necrosis factor (TNF), interferon (IFN) or lipopolysaccharide (LPS). Modulates the balance between phosphatidylinositol 3-kinase (PI3K)-AKT-mediated cell survival and apoptosis stimulated kinase (MAP3K5)-JNK signaling pathways; sequesters both AKT1 and MAP3K5 and counterbalances the activity of each kinase by modulating their phosphorylation status in response to pro-inflammatory stimuli. Acts as a regulator of the endoplasmic reticulum (ER) unfolded protein response (UPR) pathway; specifically involved in transduction of the ER stress-response to the JNK cascade through ERN1. Mediates TNF-alpha-induced apoptosis activation by facilitating dissociation of inhibitor 14-3-3 from MAP3K5; recruits the PP2A phosphatase complex which dephosphorylates MAP3K5 on 'Ser-966', leading to the dissociation of 13-3-3 proteins and activation of the MAP3K5-JNK signaling pathway in endothelial cells. Also mediates TNF/TRAF2-induced MAP3K5-JNK activation, while it inhibits CHUK-NF-kappa-B signaling. Acts a negative regulator in the IFN-gamma-mediated JAK-STAT signaling cascade by inhibiting smooth muscle cell (VSMCs) proliferation and intimal expansion, and thus, prevents graft arteriosclerosis (GA). Acts as a GTPase-activating protein (GAP) for the ADP ribosylation factor 6 (ARF6), Ras and RAB40C. Promotes hydrolysis of the ARF6-bound GTP and thus, negatively regulates phosphatidylinositol 4,5-bisphosphate (PIP2)-dependent TLR4-TIRAP-MyD88 and NF-kappa-B signaling pathways in endothelial cells in response to lipopolysaccharides (LPS). Binds specifically to phosphatidylinositol 4-phosphate (PtdIns4P) and phosphatidylinositol 3-phosphate (PtdIns3P). In response to vascular endothelial growth factor (VEGFA), acts as a negative regulator of the VEGFR2-PI3K-mediated angiogenic signaling pathway by inhibiting endothelial cell migration and tube formation. In the developing brain, promotes both the transition from the multipolar to the bipolar stage and the radial migration of cortical neurons from the ventricular zone toward the superficial layer of the neocortex in a glial-dependent locomotion process. Probable downstream effector of the Reelin signaling pathway; promotes Purkinje cell (PC) dendrites development and formation of cerebellar synapses. Also functions as a tumor suppressor protein in prostate cancer progression; prevents cell proliferation and epithelial-to-mesenchymal transition (EMT) through activation of the glycogen synthase kinase-3 beta (GSK3B)-induced beta-catenin and inhibition of PI3K-AKT and Ras-MAPK survival downstream signaling cascades, respectively. The protein is Disabled homolog 2-interacting protein of Homo sapiens (Human).